A 211-amino-acid polypeptide reads, in one-letter code: Thiamine-phosphate synthase (211 aa).

4-amino-2-methyl-5-(diphosphooxymethyl)pyrimidine is bound by residues 37 to 41 (QLRIK) and N69. 2 residues coordinate Mg(2+): D70 and D89. 4-amino-2-methyl-5-(diphosphooxymethyl)pyrimidine is bound at residue S108. 2-[(2R,5Z)-2-carboxy-4-methylthiazol-5(2H)-ylidene]ethyl phosphate is bound at residue 134–136 (TQT). K137 lines the 4-amino-2-methyl-5-(diphosphooxymethyl)pyrimidine pocket. Residues G166 and 186–187 (VS) each bind 2-[(2R,5Z)-2-carboxy-4-methylthiazol-5(2H)-ylidene]ethyl phosphate.

This sequence belongs to the thiamine-phosphate synthase family. Mg(2+) is required as a cofactor.

The enzyme catalyses 2-[(2R,5Z)-2-carboxy-4-methylthiazol-5(2H)-ylidene]ethyl phosphate + 4-amino-2-methyl-5-(diphosphooxymethyl)pyrimidine + 2 H(+) = thiamine phosphate + CO2 + diphosphate. It catalyses the reaction 2-(2-carboxy-4-methylthiazol-5-yl)ethyl phosphate + 4-amino-2-methyl-5-(diphosphooxymethyl)pyrimidine + 2 H(+) = thiamine phosphate + CO2 + diphosphate. It carries out the reaction 4-methyl-5-(2-phosphooxyethyl)-thiazole + 4-amino-2-methyl-5-(diphosphooxymethyl)pyrimidine + H(+) = thiamine phosphate + diphosphate. Its pathway is cofactor biosynthesis; thiamine diphosphate biosynthesis; thiamine phosphate from 4-amino-2-methyl-5-diphosphomethylpyrimidine and 4-methyl-5-(2-phosphoethyl)-thiazole: step 1/1. Functionally, condenses 4-methyl-5-(beta-hydroxyethyl)thiazole monophosphate (THZ-P) and 2-methyl-4-amino-5-hydroxymethyl pyrimidine pyrophosphate (HMP-PP) to form thiamine monophosphate (TMP). The polypeptide is Thiamine-phosphate synthase (Escherichia coli O6:H1 (strain CFT073 / ATCC 700928 / UPEC)).